Here is an 863-residue protein sequence, read N- to C-terminus: Ribosomal protein S6 kinase alpha-5 (863 aa).

Gly residues predominate over residues 1–21 (MEGEGGGSGGAGTSGDSGDGG). Positions 1 to 22 (MEGEGGGSGGAGTSGDSGDGGE) are disordered. The Protein kinase 1 domain occupies 48–317 (FELLKVLGTG…AEEIKEHLFF (270 aa)). Residues 54–62 (LGTGAYGKV) and lysine 80 each bind ATP. Aspartate 176 acts as the Proton acceptor in catalysis. Serine 211 carries the phosphoserine; by autocatalysis modification. The region spanning 318 to 386 (EKIKWDDLAA…VAPSILFKRN (69 aa)) is the AGC-kinase C-terminal domain. At serine 359 the chain carries Phosphoserine; by MAPK1, MAPK3 and MAPK14. A phosphoserine; by autocatalysis mark is found at serine 375 and serine 380. One can recognise a Protein kinase 2 domain in the interval 428 to 675 (DKPLGEGSFS…SCDLWSLGVI (248 aa)). Residues 431–440 (LGEGSFSICR) and lysine 454 each bind ATP. Catalysis depends on aspartate 608, which acts as the Proton acceptor. Threonine 645 carries the phosphothreonine; by MAPK1, MAPK3 and MAPK14 modification. Residues serine 711, serine 721, serine 755, and serine 759 each carry the phosphoserine modification. At threonine 764 the chain carries Phosphothreonine. The segment at 805–863 (AKRRKMKRTSTSTETRSSSSESSRSSSSQSHGKTTPTKTLQPSNPTEGSNPDTLFQFSD) is disordered. The span at 813 to 832 (TSTSTETRSSSSESSRSSSS) shows a compositional bias: low complexity. Phosphoserine; by autocatalysis occurs at positions 814, 816, and 822. Positions 833–863 (QSHGKTTPTKTLQPSNPTEGSNPDTLFQFSD) are enriched in polar residues. Phosphoserine is present on serine 862.

Belongs to the protein kinase superfamily. AGC Ser/Thr protein kinase family. S6 kinase subfamily. In terms of assembly, forms a complex with either MAPK1/ERK2 or MAPK3/ERK1 in quiescent cells which transiently dissociates following mitogenic stimulation. Also associates with MAPK14/p38-alpha. Activated RPS6KA5 associates with and phosphorylates the NF-kappa-B p65 subunit RELA. Interacts with CREBBP and EP300. Mg(2+) is required as a cofactor. Ser-375 and Thr-645 phosphorylation is required for kinase activity. Ser-375 and Ser-211 are autophosphorylated by the C-terminal kinase domain, and their phosphorylation is essential for the catalytic activity of the N-terminal kinase domain. Phosphorylated at Ser-359, Thr-645 and Thr-764 by MAPK1/ERK2, MAPK3/ERK1 and MAPK14/p38-alpha. Autophosphorylated at Ser-814, Ser-816 and Ser-822 by the N-terminal kinase domain. In terms of processing, ubiquitinated.

It localises to the nucleus. It catalyses the reaction L-seryl-[protein] + ATP = O-phospho-L-seryl-[protein] + ADP + H(+). The enzyme catalyses L-threonyl-[protein] + ATP = O-phospho-L-threonyl-[protein] + ADP + H(+). With respect to regulation, activated by phosphorylation at Ser-359, Thr-645 and Thr-764 by MAPK1/ERK2, MAPK3/ERK1 and MAPK14/p38-alpha, and by further autophosphorylation of Ser-211, Ser-375 and Ser-380 by the activated C-terminal kinase domain. The active N-terminal kinase domain finally phosphorylates downstream substrates, as well as Ser-814, Ser-816 and Ser-822 in its own C-terminal region. In terms of biological role, serine/threonine-protein kinase that is required for the mitogen or stress-induced phosphorylation of the transcription factors CREB1 and ATF1 and for the regulation of the transcription factors RELA, STAT3 and ETV1/ER81, and that contributes to gene activation by histone phosphorylation and functions in the regulation of inflammatory genes. Phosphorylates CREB1 and ATF1 in response to mitogenic or stress stimuli such as UV-C irradiation, epidermal growth factor (EGF) and anisomycin. Plays an essential role in the control of RELA transcriptional activity in response to TNF and upon glucocorticoid, associates in the cytoplasm with the glucocorticoid receptor NR3C1 and contributes to RELA inhibition and repression of inflammatory gene expression. In skeletal myoblasts is required for phosphorylation of RELA at 'Ser-276' during oxidative stress. In erythropoietin-stimulated cells, is necessary for the 'Ser-727' phosphorylation of STAT3 and regulation of its transcriptional potential. Phosphorylates ETV1/ER81 at 'Ser-191' and 'Ser-216', and thereby regulates its ability to stimulate transcription, which may be important during development and breast tumor formation. Directly represses transcription via phosphorylation of 'Ser-1' of histone H2A. Phosphorylates 'Ser-10' of histone H3 in response to mitogenics, stress stimuli and EGF, which results in the transcriptional activation of several immediate early genes, including proto-oncogenes c-fos/FOS and c-jun/JUN. May also phosphorylate 'Ser-28' of histone H3. Mediates the mitogen- and stress-induced phosphorylation of high mobility group protein 1 (HMGN1/HMG14). In lipopolysaccharide-stimulated primary macrophages, acts downstream of the Toll-like receptor TLR4 to limit the production of pro-inflammatory cytokines. Functions probably by inducing transcription of the MAP kinase phosphatase DUSP1 and the anti-inflammatory cytokine interleukin 10 (IL10), via CREB1 and ATF1 transcription factors. Plays a role in neuronal cell death by mediating the downstream effects of excitotoxic injury. Phosphorylates TRIM7 at 'Ser-106' in response to growth factor signaling via the MEK/ERK pathway, thereby stimulating its ubiquitin ligase activity. The polypeptide is Ribosomal protein S6 kinase alpha-5 (Rps6ka5) (Mus musculus (Mouse)).